We begin with the raw amino-acid sequence, 213 residues long: NADH-quinone oxidoreductase subunit I (213 aa).

4Fe-4S ferredoxin-type domains lie at 74-103 and 113-142; these read RFIE…METS and ENYS…HGTE. [4Fe-4S] cluster contacts are provided by Cys83, Cys86, Cys89, Cys93, Cys122, Cys125, Cys128, and Cys132.

Belongs to the complex I 23 kDa subunit family. In terms of assembly, NDH-1 is composed of 14 different subunits. Subunits NuoA, H, J, K, L, M, N constitute the membrane sector of the complex. [4Fe-4S] cluster is required as a cofactor.

The protein resides in the cell inner membrane. The enzyme catalyses a quinone + NADH + 5 H(+)(in) = a quinol + NAD(+) + 4 H(+)(out). Functionally, NDH-1 shuttles electrons from NADH, via FMN and iron-sulfur (Fe-S) centers, to quinones in the respiratory chain. The immediate electron acceptor for the enzyme in this species is believed to be ubiquinone. Couples the redox reaction to proton translocation (for every two electrons transferred, four hydrogen ions are translocated across the cytoplasmic membrane), and thus conserves the redox energy in a proton gradient. The polypeptide is NADH-quinone oxidoreductase subunit I (Campylobacter jejuni subsp. jejuni serotype O:23/36 (strain 81-176)).